Reading from the N-terminus, the 369-residue chain is MEMMKIDPLFDRASELKAFDETKTGVKGLVDSGVSQVPRIFHHPTVKLSTPKPLPSDLLHLKTIPTIDLGGRDFQDAIKRNNAIEEIKEAAAKWGFFQVINHGVSLELLEKMKKGVRDFHEQSQEVRKEFYSRDFSRRFLYLSNFDLFSSPAANWRDTFSCTMAPDTPKPQDLPEICRDIMMEYSKQVMNLGKFLFELLSEALGLEPNHLNDMDCSKGLLMLSHYYPPCPEPDLTLGTSQHSDNSFLTVLLPDQIEGLQVRREGHWFDVPHVSGALIINIGDLLQLITNDKFISLEHRVLANRATRARVSVACFFTTGVRPNPRMYGPIRELVSEENPPKYRETTIKDYATYFNAKGLDGTSALLHFKI.

The Fe2OG dioxygenase domain occupies lysine 217–glycine 318. Residues histidine 241, aspartate 243, and histidine 297 each coordinate Fe cation.

It belongs to the iron/ascorbate-dependent oxidoreductase family. It depends on Fe cation as a cofactor.

This is 1-aminocyclopropane-1-carboxylate oxidase homolog 3 from Arabidopsis thaliana (Mouse-ear cress).